Here is a 210-residue protein sequence, read N- to C-terminus: HTH-type transcriptional repressor FabR (210 aa).

An HTH tetR-type domain is found at 10–70 (KTRRSLVEAA…TMVDESGLML (61 aa)). Residues 33 to 52 (SLREVAREAGIAPTSFYRHF) constitute a DNA-binding region (H-T-H motif).

As to quaternary structure, homodimer.

It is found in the cytoplasm. Functionally, represses the transcription of fabB, involved in unsaturated fatty acid (UFA) biosynthesis. By controlling UFA production, FabR directly influences the physical properties of the membrane bilayer. The polypeptide is HTH-type transcriptional repressor FabR (Salmonella paratyphi A (strain ATCC 9150 / SARB42)).